We begin with the raw amino-acid sequence, 757 residues long: Chloride channel protein C (757 aa).

The Cytoplasmic segment spans residues 1-96 (MGSSLNKPLS…LHLKKTFGKW (96 aa)). 11 consecutive transmembrane segments (helical) span residues 97–117 (IICL…KMVV), 141–161 (FLTF…MVIV), 196–216 (IVSL…GPMI), 253–273 (FISI…IGGV), 292–312 (TFFT…GIGS), 337–357 (LLCF…FVFL), 378–398 (FEAL…SFIF), 462–482 (LLVF…LWVA), 484–504 (GLFV…GQTI), 506–526 (MWFT…AMMA), and 535–555 (IVVI…IILA). 2 CBS domains span residues 600–667 (MSKN…TGEE) and 710–757 (MNSS…NDLF).

Belongs to the chloride channel (TC 2.A.49) family.

It localises to the membrane. Functionally, voltage-gated chloride channel. Chloride channels may have several functions including the regulation of cell volume, membrane potential stabilization and signal transduction. This is Chloride channel protein C (clcC) from Dictyostelium discoideum (Social amoeba).